We begin with the raw amino-acid sequence, 257 residues long: Acetylglutamate kinase (257 aa).

Residues 43-44, Arg65, and Asn157 each bind substrate; that span reads GG. ATP-binding positions include 180 to 185 and 208 to 210; these read DVSGIL and IIT.

This sequence belongs to the acetylglutamate kinase family. ArgB subfamily. Homodimer.

The protein resides in the cytoplasm. It carries out the reaction N-acetyl-L-glutamate + ATP = N-acetyl-L-glutamyl 5-phosphate + ADP. It participates in amino-acid biosynthesis; L-arginine biosynthesis; N(2)-acetyl-L-ornithine from L-glutamate: step 2/4. Functionally, catalyzes the ATP-dependent phosphorylation of N-acetyl-L-glutamate. This is Acetylglutamate kinase from Klebsiella pneumoniae (strain 342).